Here is a 284-residue protein sequence, read N- to C-terminus: UTP--glucose-1-phosphate uridylyltransferase (284 aa).

Belongs to the UDPGP type 2 family.

It carries out the reaction alpha-D-glucose 1-phosphate + UTP + H(+) = UDP-alpha-D-glucose + diphosphate. This chain is UTP--glucose-1-phosphate uridylyltransferase (celA), found in Komagataeibacter xylinus (Gluconacetobacter xylinus).